The primary structure comprises 532 residues: Flavin-containing monooxygenase 3 (532 aa).

FAD-binding positions include 9-13 (GAGVS), glutamate 32, 40-41 (LW), and 61-62 (NS). NADP(+) contacts are provided by residues 60-61 (SN) and 195-198 (SGCD). Serine 401 carries the post-translational modification Phosphoserine. The helical transmembrane segment at 510–530 (FFFHWLKLFAIPILLIAVFLV) threads the bilayer.

It belongs to the FMO family. Requires FAD as cofactor.

The protein resides in the microsome membrane. The protein localises to the endoplasmic reticulum membrane. The catalysed reaction is trimethylamine + NADPH + O2 = trimethylamine N-oxide + NADP(+) + H2O. It catalyses the reaction N,N-dimethylaniline + NADPH + O2 + H(+) = N,N-dimethylaniline N-oxide + NADP(+) + H2O. It carries out the reaction hypotaurine + NADPH + O2 + H(+) = taurine + NADP(+) + H2O. The enzyme catalyses (S)-nicotine + NADPH + O2 = trans-(S)-nicotine N(1')-oxide + NADP(+) + H2O. The catalysed reaction is albendazole + NADPH + O2 + H(+) = albendazole S-oxide + NADP(+) + H2O. Essential hepatic enzyme that catalyzes the oxygenation of a wide variety of nitrogen- and sulfur-containing compounds including drugs as well as dietary compounds. Plays an important role in the metabolism of trimethylamine (TMA), via the production of trimethylamine N-oxide (TMAO) metabolite. TMA is generated by the action of gut microbiota using dietary precursors such as choline, choline containing compounds, betaine or L-carnitine. By regulating TMAO concentration, FMO3 directly impacts both platelet responsiveness and rate of thrombus formation. This chain is Flavin-containing monooxygenase 3 (FMO3), found in Pan troglodytes (Chimpanzee).